The primary structure comprises 164 residues: C-phycoerythrin class 1 subunit alpha (164 aa).

Residues cysteine 82 and cysteine 139 each contribute to the (2R,3E)-phycoerythrobilin site.

It belongs to the phycobiliprotein family. Heterodimer of an alpha and a beta chain. In terms of processing, contains two covalently linked phycoerythrobilin chromophores.

Its subcellular location is the cellular thylakoid membrane. Light-harvesting photosynthetic bile pigment-protein from the phycobiliprotein complex. This chain is C-phycoerythrin class 1 subunit alpha (cpeA), found in Synechococcus sp. (strain WH8020).